The primary structure comprises 260 residues: BTB/POZ domain-containing protein KCTD21 (260 aa).

Residues 3-72 form the BTB domain; that stretch reads DPITLNVGGK…LRTSHLDLPE (70 aa). Positions 88-112 form a coiled coil; it reads QVQPLIEALQEKEVELSKAEKNAML.

In terms of assembly, homopentamer. Interacts with KCTD11; KCTD21 and KCTD11 may associate in pentameric assemblies. Interacts (via BTB domain) with CUL3; indicative for a participation in a BCR (BTB-CUL3-RBX1) E3 ubiquitin-protein ligase complex. Highly expressed in cerebellum and brain. Expression is down-regulated in medulloblastoma.

The protein operates within protein modification; protein ubiquitination. In terms of biological role, probable substrate-specific adapter of a BCR (BTB-CUL3-RBX1) E3 ubiquitin-protein ligase complex mediating the ubiquitination and subsequent proteasomal degradation of target proteins. Promotes the ubiquitination of HDAC1. Can function as antagonist of the Hedgehog pathway by affecting the nuclear transfer of transcription factor GLI1; the function probably occurs via HDAC1 down-regulation, keeping GLI1 acetylated and inactive. Inhibits cell growth and tumorigenicity of medulloblastoma (MDB). In Homo sapiens (Human), this protein is BTB/POZ domain-containing protein KCTD21 (KCTD21).